The chain runs to 341 residues: 4-hydroxy-2-oxovalerate aldolase 3 (341 aa).

Residues 5–257 (ITLHDMTLRD…ETGVDVYRIA (253 aa)) form the Pyruvate carboxyltransferase domain. 13–14 (RD) lines the substrate pocket. A Mn(2+)-binding site is contributed by aspartate 14. Histidine 17 serves as the catalytic Proton acceptor. Substrate is bound by residues serine 167 and histidine 196. Residues histidine 196 and histidine 198 each contribute to the Mn(2+) site. Position 287 (tyrosine 287) interacts with substrate.

Belongs to the 4-hydroxy-2-oxovalerate aldolase family.

The enzyme catalyses (S)-4-hydroxy-2-oxopentanoate = acetaldehyde + pyruvate. This is 4-hydroxy-2-oxovalerate aldolase 3 (bpHI) from Cupriavidus necator (strain ATCC 17699 / DSM 428 / KCTC 22496 / NCIMB 10442 / H16 / Stanier 337) (Ralstonia eutropha).